The primary structure comprises 149 residues: Large ribosomal subunit protein uL11 (149 aa).

This sequence belongs to the universal ribosomal protein uL11 family. Part of the ribosomal stalk of the 50S ribosomal subunit. Interacts with L10 and the large rRNA to form the base of the stalk. L10 forms an elongated spine to which L12 dimers bind in a sequential fashion forming a multimeric L10(L12)X complex. In terms of processing, one or more lysine residues are methylated.

Its function is as follows. Forms part of the ribosomal stalk which helps the ribosome interact with GTP-bound translation factors. In Methylorubrum extorquens (strain CM4 / NCIMB 13688) (Methylobacterium extorquens), this protein is Large ribosomal subunit protein uL11.